We begin with the raw amino-acid sequence, 310 residues long: UDP-N-acetylenolpyruvoylglucosamine reductase (310 aa).

The FAD-binding PCMH-type domain maps to 34-213; that stretch reads RAGGNAEVLF…LRRMNEITSS (180 aa). R178 is an active-site residue. The active-site Proton donor is S227. E297 is a catalytic residue.

Belongs to the MurB family. The cofactor is FAD.

The protein localises to the cytoplasm. The enzyme catalyses UDP-N-acetyl-alpha-D-muramate + NADP(+) = UDP-N-acetyl-3-O-(1-carboxyvinyl)-alpha-D-glucosamine + NADPH + H(+). Its pathway is cell wall biogenesis; peptidoglycan biosynthesis. In terms of biological role, cell wall formation. This chain is UDP-N-acetylenolpyruvoylglucosamine reductase, found in Parvibaculum lavamentivorans (strain DS-1 / DSM 13023 / NCIMB 13966).